Reading from the N-terminus, the 241-residue chain is MRLKLSLTPKQDFSFDKINKHTIQGFIYSLLKDTEFGEMHNQPRFKFWCFSDIFPPNDFVKGEDKYLLISSPREEFINVLYERLDNLEEVNLNNFKFEVSELKKFDLKVKNKFITGSPIVLYKDKDRGEYIKFYDDDFDLMFFVQRLQDNAVKKYKAFYNEEPVLNGFIFDRISPRVRNGRVDVYVRIAKKGREFLVVGTTWKLLEKIKIRKEERKFYKFIMDCGLGEKNSLGFGFINPIK.

Tyr-28 functions as the Proton acceptor in the catalytic mechanism. Catalysis depends on His-40, which acts as the Proton donor.

Belongs to the CRISPR-associated protein Cas6/Cse3/CasE family.

Its function is as follows. CRISPR (clustered regularly interspaced short palindromic repeat) is an adaptive immune system that provides protection against mobile genetic elements (viruses, transposable elements and conjugative plasmids). CRISPR clusters contain sequences complementary to antecedent mobile elements and target invading nucleic acids. CRISPR clusters are transcribed and processed into CRISPR RNA (crRNA). This protein processes pre-crRNA into individual crRNA units. The polypeptide is CRISPR-associated endoribonuclease Cas6 2 (cas6b) (Methanocaldococcus jannaschii (strain ATCC 43067 / DSM 2661 / JAL-1 / JCM 10045 / NBRC 100440) (Methanococcus jannaschii)).